The primary structure comprises 346 residues: Leucine zipper protein 2 (346 aa).

The N-terminal stretch at 1–19 (MKFSPAHYLLPLLPALVLS) is a signal peptide. A coiled-coil region spans residues 16–211 (LVLSTRQDYE…QMKAMKETVQ (196 aa)). N-linked (GlcNAc...) asparagine glycosylation occurs at asparagine 133. Positions 164–192 (LRYGKKDLLFKAQQLTDLEQKLAVAKNEL) are leucine-zipper. Disordered regions lie at residues 221–240 (QPPP…LLPP) and 248–346 (PDAA…EKIL). Residues 250 to 261 (AAAKSKPQQSAS) are compositionally biased toward low complexity. Polar residues predominate over residues 262-283 (GNNESSQVESTKEGNPSTTACD). N-linked (GlcNAc...) asparagine glycosylation is present at asparagine 264. The segment covering 286–298 (DEGRPCSMKHKES) has biased composition (basic and acidic residues). The N-linked (GlcNAc...) asparagine glycan is linked to asparagine 302.

The protein resides in the secreted. In Homo sapiens (Human), this protein is Leucine zipper protein 2 (LUZP2).